The primary structure comprises 60 residues: Large ribosomal subunit protein eL37 (60 aa).

Residues Cys19, Cys22, Cys34, and Cys37 each contribute to the Zn(2+) site. Residues 19-37 form a C4-type zinc finger; that stretch reads CRRCGRMSYHKRHKICSSC.

This sequence belongs to the eukaryotic ribosomal protein eL37 family. Zn(2+) serves as cofactor.

Binds to the 23S rRNA. This Methanospirillum hungatei JF-1 (strain ATCC 27890 / DSM 864 / NBRC 100397 / JF-1) protein is Large ribosomal subunit protein eL37.